Here is a 396-residue protein sequence, read N- to C-terminus: uncharacterized protein (396 aa).

The [4Fe-4S] cluster site is built by C8, C14, C17, and C95. 4 residues coordinate S-adenosyl-L-methionine: Q229, Y258, E279, and D325. C352 (nucleophile) is an active-site residue.

Belongs to the class I-like SAM-binding methyltransferase superfamily. RNA M5U methyltransferase family.

This is an uncharacterized protein from Chlamydia trachomatis serovar D (strain ATCC VR-885 / DSM 19411 / UW-3/Cx).